Reading from the N-terminus, the 98-residue chain is Large ribosomal subunit protein uL23 (98 aa).

The protein belongs to the universal ribosomal protein uL23 family. In terms of assembly, part of the 50S ribosomal subunit. Contacts protein L29, and trigger factor when it is bound to the ribosome.

Functionally, one of the early assembly proteins it binds 23S rRNA. One of the proteins that surrounds the polypeptide exit tunnel on the outside of the ribosome. Forms the main docking site for trigger factor binding to the ribosome. The chain is Large ribosomal subunit protein uL23 from Nitrobacter hamburgensis (strain DSM 10229 / NCIMB 13809 / X14).